A 609-amino-acid polypeptide reads, in one-letter code: Chaperone protein DnaK (609 aa).

Threonine 173 bears the Phosphothreonine; by autocatalysis mark. The interval 580 to 609 (QAAQGGGAEGQEPKKDNVVDADYEVVDDKK) is disordered. The segment covering 598–609 (VDADYEVVDDKK) has biased composition (acidic residues).

It belongs to the heat shock protein 70 family.

Acts as a chaperone. In Brevibacillus brevis (strain 47 / JCM 6285 / NBRC 100599), this protein is Chaperone protein DnaK.